The primary structure comprises 98 residues: Large ribosomal subunit protein uL23 (98 aa).

It belongs to the universal ribosomal protein uL23 family. Part of the 50S ribosomal subunit. Contacts protein L29, and trigger factor when it is bound to the ribosome.

In terms of biological role, one of the early assembly proteins it binds 23S rRNA. One of the proteins that surrounds the polypeptide exit tunnel on the outside of the ribosome. Forms the main docking site for trigger factor binding to the ribosome. This chain is Large ribosomal subunit protein uL23, found in Cellvibrio japonicus (strain Ueda107) (Pseudomonas fluorescens subsp. cellulosa).